Consider the following 353-residue polypeptide: Very-long-chain 3-oxoacyl-CoA reductase (353 aa).

A helical membrane pass occupies residues 33–53 (AAWALIAAGGFFVISRALLFG). Residues Val78, Asp133, Asp141, Asn160, Tyr227, Lys231, Ile260, and Ser262 each contribute to the NADP(+) site. Tyr227 serves as the catalytic Proton donor. The Lowers pKa of active site Tyr role is filled by Lys231.

The protein belongs to the short-chain dehydrogenases/reductases (SDR) family.

The protein resides in the endoplasmic reticulum membrane. It catalyses the reaction a very-long-chain (3R)-3-hydroxyacyl-CoA + NADP(+) = a very-long-chain 3-oxoacyl-CoA + NADPH + H(+). It participates in lipid metabolism; fatty acid biosynthesis. In terms of biological role, component of the microsomal membrane bound fatty acid elongation system, which produces the 26-carbon very long-chain fatty acids (VLCFA) from palmitate. Catalyzes the reduction of the 3-ketoacyl-CoA intermediate that is formed in each cycle of fatty acid elongation. VLCFAs serve as precursors for ceramide and sphingolipids. This chain is Very-long-chain 3-oxoacyl-CoA reductase, found in Aspergillus terreus (strain NIH 2624 / FGSC A1156).